An 867-amino-acid chain; its full sequence is Cilium assembly protein DZIP1 (867 aa).

The interval 12–203 (MPFQKHVYYP…KANYYQCHFC (192 aa)) is mediates interaction with PCM1. A mediates interaction with GLI3 and localization to the cilium basal body region spans residues 12–367 (MPFQKHVYYP…QDFHNVMQLL (356 aa)). The tract at residues 154–278 (CDGEQSKKLL…SKEYEMQKTK (125 aa)) is required for interaction with DAZ1. The C2H2-type zinc-finger motif lies at 198 to 221 (YQCHFCDKAFMNQAFLQSHIQRRH). S226 bears the Phosphoserine; by PLK1 mark. Coiled-coil stretches lie at residues 230–340 (YQKN…KSNI), 401–445 (TSMI…FTCN), and 568–588 (DQLH…EREI). Residues 446–617 (PLNSISEPKG…EKALLSSDQC (172 aa)) are mediates interaction with GDI2 and RAB8A. Composition is skewed to polar residues over residues 643–654 (LIRQKAVSTDRT), 671–680 (KSSTITTPPF), and 708–718 (NKGSFGKNTVK). Disordered regions lie at residues 643–768 (LIRQ…GGTN) and 796–867 (SLEE…TSDV). Acidic residues predominate over residues 722 to 733 (DGTEGSEIEDTD). Basic and acidic residues predominate over residues 807 to 823 (SGKEQKEPPPAKNEPHF). A compositionally biased stretch (low complexity) spans 848–859 (SSTLKSSLVTVT).

The protein belongs to the DZIP C2H2-type zinc-finger protein family. Interacts with DAZ1. Interacts with the BBSome; recruits the BBSome to centriolar satellites of the cilium. Interacts with PCM1; localizes DZIP1 and the associated BBSome to centriolar satellites. Interacts with RAB8A (GDP-bound inactive form); recruits RAB8A to the basal body of the cilium and prevents its inhibition by GDI2. Interacts with GDI2; negatively regulates the interaction of GDI2 with GDP-bound RAB8A. Interacts with GLI3; retains GLI3 within the cytoplasm. Interacts with CEP164. Interacts with IFT88. Phosphorylation at Ser-226 by PLK1 before mitosis prevents interaction with PCM1 and localization to centriolar satellites. Thereby, it negatively regulates the localization of the BBSome to centriolar satellites. As to expression, predominantly expressed in testis (at protein level). Also expressed in fetal brain, adult oocytes and ovary. Expressed in undifferentiated ES cells. In testis, it is specifically expressed in germ cells (at protein level). Expressed in mature germ cells and secondary spermatocytes, while it is weakly or not expressed in primary spermatocytes.

It is found in the cytoplasm. It localises to the cytoskeleton. The protein resides in the cilium basal body. Its subcellular location is the microtubule organizing center. The protein localises to the centrosome. It is found in the centriolar satellite. It localises to the centriole. The protein resides in the nucleus. Its subcellular location is the nucleus speckle. Molecular adapter that recruits protein complexes required for cilium assembly and function to the cilium basal body. At the exit of mitosis, localizes to the basal body and ciliary base of the forming primary cilium where it recruits and activates RAB8A to direct vesicle-mediated transport of proteins to the cilium. Also recruits the BBSome, a complex involved in cilium biogenesis, by bridging it to PCM1 at the centriolar satellites of the cilium. It is also required for the recruitment to the cilium basal body of the intraflagellar transport (IFT) machinery as well as the ciliary appendage proteins CEP164 and NINEIN. Functions as a regulator of Hedgehog signaling both through its role in cilium assembly but also probably through its ability to retain GLI3 within the cytoplasm. It is involved in spermatogenesis through its role in organization of the basal body and assembly of the sperm flagellum. Also indirectly involved in heart development through its function in ciliogenesis. This Homo sapiens (Human) protein is Cilium assembly protein DZIP1.